We begin with the raw amino-acid sequence, 597 residues long: uncharacterized protein (597 aa).

Residues 16–78 (VGRLVWVRRR…LENSKTVKAF (63 aa)) enclose the PWWP domain. Disordered stretches follow at residues 126 to 210 (NLCN…MRGL) and 449 to 482 (QLKGKRNSRQMSKKQEERRNVYGEEANNNSSTPH). Residues 134–143 (EDSKRCLSGK) show a composition bias toward basic and acidic residues. Over residues 144-161 (EDEDSGSSDAEETEDDEL) the composition is skewed to acidic residues. Residues 166–185 (EQLQSSISSQEMNNVGASKV) show a composition bias toward polar residues. A compositionally biased stretch (basic residues) spans 450-460 (LKGKRNSRQMS). Over residues 461–470 (KKQEERRNVY) the composition is skewed to basic and acidic residues.

This is an uncharacterized protein from Arabidopsis thaliana (Mouse-ear cress).